A 193-amino-acid polypeptide reads, in one-letter code: Acyl-homoserine-lactone synthase (193 aa).

Belongs to the autoinducer synthase family.

It catalyses the reaction a fatty acyl-[ACP] + S-adenosyl-L-methionine = an N-acyl-L-homoserine lactone + S-methyl-5'-thioadenosine + holo-[ACP] + H(+). Required for the synthesis of N-(3-oxodecanoyl)-L-homoserine lactone (ODHL), an autoinducer molecule which binds to VanR. The polypeptide is Acyl-homoserine-lactone synthase (vanI) (Vibrio anguillarum (Listonella anguillarum)).